A 232-amino-acid chain; its full sequence is LexA repressor (232 aa).

The interval 1-25 (MSDDSSDSTDAPGTSRSRDSGLTER) is disordered. The span at 16 to 25 (RSRDSGLTER) shows a compositional bias: basic and acidic residues. The H-T-H motif DNA-binding region spans 46–66 (IREIGDAVGLTSTSSVAHQLR). Active-site for autocatalytic cleavage activity residues include S156 and K193.

It belongs to the peptidase S24 family. Homodimer.

The catalysed reaction is Hydrolysis of Ala-|-Gly bond in repressor LexA.. Represses a number of genes involved in the response to DNA damage (SOS response), including recA and lexA. In the presence of single-stranded DNA, RecA interacts with LexA causing an autocatalytic cleavage which disrupts the DNA-binding part of LexA, leading to derepression of the SOS regulon and eventually DNA repair. This Mycolicibacterium gilvum (strain PYR-GCK) (Mycobacterium gilvum (strain PYR-GCK)) protein is LexA repressor.